Here is a 460-residue protein sequence, read N- to C-terminus: Gastric inhibitory polypeptide receptor (460 aa).

Positions 1–18 (MPLRLLLLLLWLWGLQWA) are cleaved as a signal peptide. The Extracellular portion of the chain corresponds to 19–134 (ETDSEGQTTT…DQTLILERLQ (116 aa)). Disulfide bonds link Cys-42/Cys-66, Cys-57/Cys-99, and Cys-80/Cys-114. 3 N-linked (GlcNAc...) asparagine glycosylation sites follow: Asn-58, Asn-68, and Asn-73. A helical transmembrane segment spans residues 135-155 (IMYTVGYSLSLTTLLLALLIL). Over 156 to 166 (SLFRRLHCTRN) the chain is Cytoplasmic. A helical membrane pass occupies residues 167–185 (YIHMNLFTSFMLRAAAILT). The Extracellular segment spans residues 186 to 222 (RDQLLPPLGPYTGDQAPTPWNQALAACRTAQIMTQYC). Residues 223–243 (VGANYTWLLVEGVYLHHLLVI) traverse the membrane as a helical segment. The Cytoplasmic segment spans residues 244–255 (VGRSEKGHFRCY). Residues 256–276 (LLLGWGAPALFVIPWVIVRYL) traverse the membrane as a helical segment. The Extracellular portion of the chain corresponds to 277-297 (RENTQCWERNEVKAIWWIIRT). A helical membrane pass occupies residues 298–318 (PILITILINFLIFIRILGILV). Residues 319–337 (SKLRTRQMRCPDYRLRLAR) lie on the Cytoplasmic side of the membrane. Residues 338–358 (STLTLVPLLGVHEVVFAPVTE) traverse the membrane as a helical segment. Over 359 to 370 (EQVEGSLRFAKL) the chain is Extracellular. Residues 371-391 (AFEIFLSSFQGFLVSVLYCFI) traverse the membrane as a helical segment. At 392–460 (NKEVQSEIRQ…PGDEVLESYC (69 aa)) the chain is on the cytoplasmic side.

Belongs to the G-protein coupled receptor 2 family. May form homodimers and heterodimers with GLP1R. N-glycosylation is required for cell surface expression and lengthens receptor half-life by preventing degradation in the ER.

Its subcellular location is the cell membrane. In terms of biological role, this is a receptor for GIP. The activity of this receptor is mediated by G proteins which activate adenylyl cyclase. The polypeptide is Gastric inhibitory polypeptide receptor (Gipr) (Mus musculus (Mouse)).